A 523-amino-acid polypeptide reads, in one-letter code: MATCFLLRSFWAARPALPPPGRFRPEPAGTPRRSYASGPGGLHADLLRGDSFVGGRWLPAPATFPVYDPASGAKLGTVADCGVPEARAAVRAAYDAFNSWKGVSVKERSLLLRKWYDLMIQNKDDLAKIITAESGKPLKEAQGEILYSALFLEWFSEEARRIYGDIIYTSAKDKRGLVLKQPVGVAAIITPWNFPSAMITRKVGAALAAGCTVVVKPAEDTPYSALALAQLANQAGIPAGVYNVIPCSRNKAKEVGEVLCTDPLVSKISFTGSTATGKILLHHAANSVKRVSMELGGLAPFIVFDSANVDQAVAGAMASKFRNAGQTCVCSNRFLVQRGIHDSFVTKFAEAMKKSLRVGNGFEEGTTQGPLINEKAVEKVEKQVNDAVAKGATVVTGGKRHQSGGNFFEPTLLSNVTRDMLCITEETFGPLAPVIKFDKEEEAVAIANAAEVGLAGYFYSQDPAQIWRVAEQLEVGMVGVNEGLISSVECPFGGVKQSGLGREGSKYGIDEYLEVKYVCYGGL.

Residues 1-35 (MATCFLLRSFWAARPALPPPGRFRPEPAGTPRRSY) constitute a mitochondrion transit peptide. Lys74 bears the N6-acetyllysine mark. N6-acetyllysine; alternate is present on Lys114. Lys114 carries the N6-succinyllysine; alternate modification. Lys123 bears the N6-succinyllysine mark. Position 128 is an N6-acetyllysine (Lys128). Lys172 is subject to N6-succinyllysine. Residues Arg201 and 216–219 (KPAE) each bind NAD(+). Arg201 provides a ligand contact to substrate. Lys253 carries the N6-acetyllysine; alternate modification. Lys253 is subject to N6-succinyllysine; alternate. Residue 272-277 (GSTATG) participates in NAD(+) binding. Glu294 functions as the Proton acceptor in the catalytic mechanism. Residue Arg322 participates in substrate binding. Catalysis depends on Cys328, which acts as the Nucleophile. Cys328 and Cys330 are oxidised to a cystine. At Lys347 the chain carries N6-acetyllysine; alternate. Lys347 carries the post-translational modification N6-succinyllysine; alternate. Residue Lys353 is modified to N6-acetyllysine. At Lys390 the chain carries N6-succinyllysine. Lys399 bears the N6-acetyllysine mark. Ser403 bears the Phosphoserine mark. Residue Ser486 coordinates substrate. Ser487 carries the phosphoserine modification.

It belongs to the aldehyde dehydrogenase family. Homotetramer.

It is found in the mitochondrion. The catalysed reaction is succinate semialdehyde + NAD(+) + H2O = succinate + NADH + 2 H(+). Its pathway is amino-acid degradation; 4-aminobutanoate degradation. Its activity is regulated as follows. Redox-regulated. Inhibited under oxydizing conditions. Catalyzes one step in the degradation of the inhibitory neurotransmitter gamma-aminobutyric acid (GABA). The protein is Succinate-semialdehyde dehydrogenase, mitochondrial (Aldh5a1) of Mus musculus (Mouse).